Here is a 294-residue protein sequence, read N- to C-terminus: Cytidine deaminase (294 aa).

2 CMP/dCMP-type deaminase domains span residues 48-168 (DEDA…FGPK) and 186-294 (LTGD…TLLA). 89-91 (NME) is a substrate binding site. Position 102 (His102) interacts with Zn(2+). The Proton donor role is filled by Glu104. 2 residues coordinate Zn(2+): Cys129 and Cys132.

Belongs to the cytidine and deoxycytidylate deaminase family. In terms of assembly, homodimer. Zn(2+) is required as a cofactor.

It catalyses the reaction cytidine + H2O + H(+) = uridine + NH4(+). The enzyme catalyses 2'-deoxycytidine + H2O + H(+) = 2'-deoxyuridine + NH4(+). Its function is as follows. This enzyme scavenges exogenous and endogenous cytidine and 2'-deoxycytidine for UMP synthesis. The sequence is that of Cytidine deaminase from Enterobacter sp. (strain 638).